A 271-amino-acid chain; its full sequence is Phthiotriol/phenolphthiotriol dimycocerosates methyltransferase 1 (271 aa).

It belongs to the methyltransferase superfamily. Phthiotriol/phenolphthiotriol dimycocerosates methyltransferase family.

Functionally, catalyzes the methylation of the lipid moiety of the intermediate compounds phthiotriol and glycosylated phenolphthiotriol dimycoserosates to form phthiocerol dimycocerosates (DIM A) and glycosylated phenolphthiocerol dimycocerosates (PGL). This is Phthiotriol/phenolphthiotriol dimycocerosates methyltransferase 1 from Mycobacterium ulcerans (strain Agy99).